We begin with the raw amino-acid sequence, 385 residues long: Nod factor hydrolase protein 1 (385 aa).

The first 21 residues, 1-21, serve as a signal peptide directing secretion; it reads MANFLKLKQFLTLVLILLALA. The region spanning 36–385 is the GH18 domain; that stretch reads RVKGIYWIEN…TASKAWRPES (350 aa). 2 N-linked (GlcNAc...) asparagine glycosylation sites follow: Asn-115 and Asn-134. Residue Glu-153 is the Proton donor of the active site. 2 N-linked (GlcNAc...) asparagine glycosylation sites follow: Asn-233 and Asn-247.

This sequence belongs to the glycosyl hydrolase 18 family. Chitinase class V subfamily.

Functionally, symbiotic enzyme that hydrolytically inactivates Nod factors (NFs) with a C16:2 acyl chain produced by the microsymbiont Sinorhizobium meliloti. NFs are lipo-chitooligosaccharide signaling molecules produced by nitrogen-fixing rhizobia to initiate nodulation (symbiosis) on the roots of legumes. Controls NF hydrolysis at the stage of root hair infection. Involved in the regulation of growth and branching of mature nodules. Modulates NF levels and signaling to complete transition of infected nodules to functional nitrogen-fixing organs. Lacks chitinase activity in vitro toward glycol chitin, carboxymethyl-chitin, colloidal chitin, and the chitin oligosaccharides (N-acetylglucosamine) (GlcNAc)6 and (GlcNAc)5. This Medicago truncatula (Barrel medic) protein is Nod factor hydrolase protein 1.